A 1708-amino-acid polypeptide reads, in one-letter code: Clathrin heavy chain 1 (1708 aa).

The tract at residues 1–492 (MAAANAPIAM…VDNDLALKIY (492 aa)) is globular terminal domain. WD40-like repeat regions lie at residues 25–67 (FVTF…RPIT), 68–113 (ADSA…MPEQ), 114–155 (VVFW…ANLA), 156–205 (NNQI…QALE), 206–270 (AHAA…PDFQ), 271–314 (DDFP…ISPD), and 315–343 (PIFLTAESSASGGFYAINRRGQVLHATVN). The binding site for the uncoating ATPase, involved in lattice disassembly stretch occupies residues 462–478 (ENWLAEDKLECSEELGD). Residues 493–536 (IKARATPKVVAAFAERREFDKILIYSKQVGYTPDYLFLLQTILR) are flexible linker. The interval 537–648 (TDPQGAVNFA…RALQHYTELP (112 aa)) is distal segment. A heavy chain arm region spans residues 537–1708 (TDPQGAVNFA…AYGMPPMGSY (1172 aa)). 7 CHCR repeats span residues 551 to 697 (QMEG…QIVV), 700 to 842 (AKEY…PEDF), 847 to 986 (ILSV…QLID), 993 to 1138 (LPES…VSEA), 1142 to 1283 (FIRA…FRLA), 1288 to 1434 (LNII…DLIN), and 1437 to 1580 (LNVL…KECF). The interval 653–1708 (VMVNTHAIEP…AYGMPPMGSY (1056 aa)) is proximal segment. Residues 1227-1536 (AAKIIYAFIS…YIYKKAGRWK (310 aa)) are involved in binding clathrin light chain. A trimerization region spans residues 1564 to 1708 (SEDLLVYFIE…AYGMPPMGSY (145 aa)).

Belongs to the clathrin heavy chain family. In terms of assembly, clathrin triskelions, composed of 3 heavy chains and 3 light chains, are the basic subunits of the clathrin coat.

The protein localises to the cytoplasmic vesicle membrane. The protein resides in the membrane. It localises to the coated pit. Clathrin is the major protein of the polyhedral coat of coated pits and vesicles. The chain is Clathrin heavy chain 1 from Oryza sativa subsp. japonica (Rice).